Here is a 240-residue protein sequence, read N- to C-terminus: T-cell antigen CD7 (240 aa).

The N-terminal stretch at 1–25 (MAGPPRLLLLPLLLALARGLPGALA) is a signal peptide. Positions 26 to 130 (AQEVQQSPHC…NVYGSGTLVL (105 aa)) constitute an Ig-like domain. Residues 26–180 (AQEVQQSPHC…PDPPAASALP (155 aa)) lie on the Extracellular side of the membrane. 2 disulfide bridges follow: C35/C142 and C48/C114. Residues N45 and N96 are each glycosylated (N-linked (GlcNAc...) asparagine). Residues 140-172 (HRCSDAPPRASALPAPPTGSALPDPQTASALPD) are disordered. Repeat copies occupy residues 145-153 (APPRASALP), 154-162 (APPTGSALP), 163-171 (DPQTASALP), and 172-180 (DPPAASALP). A 4 X 9 AA tandem repeats, potential spacer function region spans residues 145–180 (APPRASALPAPPTGSALPDPQTASALPDPPAASALP). The helical transmembrane segment at 181 to 201 (AALAVISFLLGLGLGVACVLA) threads the bilayer. C198 carries the S-palmitoyl cysteine lipid modification. At 202 to 240 (RTQIKKLCSWRDKNSAACVVYEDMSHSRCNTLSSPNQYQ) the chain is on the cytoplasmic side.

In terms of assembly, interacts with SECTM1. As to expression, expressed on T-cells and natural killer (NK) cells and their precursors.

Its subcellular location is the membrane. In terms of biological role, transmembrane glycoprotein expressed by T-cells and natural killer (NK) cells and their precursors. Plays a costimulatory role in T-cell activation upon binding to its ligand K12/SECTM1. In turn, mediates the production of cytokines such as IL-2. On resting NK-cells, CD7 activation results in a significant induction of interferon-gamma levels. The polypeptide is T-cell antigen CD7 (CD7) (Homo sapiens (Human)).